The primary structure comprises 440 residues: tRNA-2-methylthio-N(6)-dimethylallyladenosine synthase (440 aa).

The MTTase N-terminal domain maps to K4–E122. Residues C13, C49, C83, C159, C163, and C166 each coordinate [4Fe-4S] cluster. The 231-residue stretch at R145–E375 folds into the Radical SAM core domain. A TRAM domain is found at K378 to V440.

It belongs to the methylthiotransferase family. MiaB subfamily. In terms of assembly, monomer. The cofactor is [4Fe-4S] cluster.

It localises to the cytoplasm. It carries out the reaction N(6)-dimethylallyladenosine(37) in tRNA + (sulfur carrier)-SH + AH2 + 2 S-adenosyl-L-methionine = 2-methylsulfanyl-N(6)-dimethylallyladenosine(37) in tRNA + (sulfur carrier)-H + 5'-deoxyadenosine + L-methionine + A + S-adenosyl-L-homocysteine + 2 H(+). Its function is as follows. Catalyzes the methylthiolation of N6-(dimethylallyl)adenosine (i(6)A), leading to the formation of 2-methylthio-N6-(dimethylallyl)adenosine (ms(2)i(6)A) at position 37 in tRNAs that read codons beginning with uridine. This chain is tRNA-2-methylthio-N(6)-dimethylallyladenosine synthase, found in Carboxydothermus hydrogenoformans (strain ATCC BAA-161 / DSM 6008 / Z-2901).